A 194-amino-acid polypeptide reads, in one-letter code: 23 kDa U4/U6.U5 small nuclear ribonucleoprotein component (194 aa).

A C2H2-type zinc finger spans residues 80–104; it reads FYCDICNLTFKDTLQYIDHLNHKVH.

In terms of assembly, component of the U4/U6-U5 tri-snRNP complex composed of the U4, U6 and U5 snRNAs and at least PRP3, PRP4, PRP6, PRP8, PRP18, PRP31, PRP38, SNU13, SNU23, SNU66, SNU114, SPP381, SMB1, SMD1, SMD2, SMD3, SMX2, SMX3, LSM2, LSM3, LSM4, LSM5, LSM6, LSM7, LSM8, BRR2 and DIB1.

Its subcellular location is the nucleus. Participates in pre-mRNA splicing. Part of the U4/U5/U6 tri-snRNP complex, one of the building blocks of the spliceosome. This chain is 23 kDa U4/U6.U5 small nuclear ribonucleoprotein component (SNU23), found in Saccharomyces cerevisiae (strain ATCC 204508 / S288c) (Baker's yeast).